We begin with the raw amino-acid sequence, 163 residues long: Small heat shock protein C1 (163 aa).

One can recognise a sHSP domain in the interval T55–N163.

Belongs to the small heat shock protein (HSP20) family.

In Rickettsia prowazekii (strain Madrid E), this protein is Small heat shock protein C1 (hspC1).